The chain runs to 471 residues: Ribulose bisphosphate carboxylase large chain (471 aa).

Asparagine 115 and threonine 165 together coordinate substrate. The Proton acceptor role is filled by lysine 167. A substrate-binding site is contributed by lysine 169. Mg(2+) contacts are provided by lysine 193, aspartate 195, and glutamate 196. Position 193 is an N6-carboxylysine (lysine 193). The active-site Proton acceptor is histidine 286. Arginine 287, histidine 319, and serine 371 together coordinate substrate.

It belongs to the RuBisCO large chain family. Type I subfamily. As to quaternary structure, heterohexadecamer of 8 large chains and 8 small chains. Mg(2+) serves as cofactor.

It localises to the carboxysome. It catalyses the reaction 2 (2R)-3-phosphoglycerate + 2 H(+) = D-ribulose 1,5-bisphosphate + CO2 + H2O. The enzyme catalyses D-ribulose 1,5-bisphosphate + O2 = 2-phosphoglycolate + (2R)-3-phosphoglycerate + 2 H(+). In terms of biological role, ruBisCO catalyzes two reactions: the carboxylation of D-ribulose 1,5-bisphosphate, the primary event in carbon dioxide fixation, as well as the oxidative fragmentation of the pentose substrate in the photorespiration process. Both reactions occur simultaneously and in competition at the same active site. The sequence is that of Ribulose bisphosphate carboxylase large chain from Synechococcus sp. (strain WH7803).